The sequence spans 472 residues: FAD-dependent monooxygenase ltmM (472 aa).

The chain crosses the membrane as a helical span at residues 7–27 (VIIVGGSVAGLSLAHCLEKIG). Glu34, Gly48, and Arg107 together coordinate FAD. A glycan (N-linked (GlcNAc...) asparagine) is linked at Asn186. FAD-binding residues include Asp306 and Ala319. Residues 450–470 (IVYALYLVAAAAFILYCLSSL) traverse the membrane as a helical segment.

This sequence belongs to the paxM FAD-dependent monooxygenase family. FAD serves as cofactor.

The protein resides in the membrane. The protein operates within secondary metabolite biosynthesis. Functionally, FAD-dependent monooxygenase; part of the gene cluster that mediates the biosynthesis of lolitrems, indole-diterpene mycotoxins that are potent tremorgens in mammals, and are synthesized by clavicipitaceous fungal endophytes in association with their grass hosts. The geranylgeranyl diphosphate (GGPP) synthase ltmG is proposed to catalyze the first step in lolitremB biosynthesis. LtmG catalyzes a series of iterative condensations of isopentenyl diphosphate (IPP) with dimethylallyl diphosphate (DMAPP), geranyl diphosphate (GPP), and farnesyl diphosphate (FPP), to form GGPP. GGPP then condenses with indole-3-glycerol phosphate to form 3-geranylgeranylindole, an acyclic intermediate, to be incorporated into paxilline. Either ltmG or ltmC could be responsible for this step, as both are putative prenyl transferases. The FAD-dependent monooxygenase ltmM then catalyzes the epoxidation of the two terminal alkenes of the geranylgeranyl moiety, which is subsequently cyclized by ltmB, to paspaline. The cytochrome P450 monooxygenases ltmQ and ltmP can sequentially oxidize paspaline to terpendole E and terpendole F. Alternatively, ltmP converts paspaline to an intermediate which is oxidized by ltmQ to terpendole F. LtmF, ltmK, ltmE and ltmJ appear to be unique to the epichloe endophytes. The prenyltransferase ltmF is involved in the 27-hydroxyl-O-prenylation. The cytochrome P450 monooxygenase ltmK is required for the oxidative acetal ring formation. The multi-functional prenyltransferase ltmE is required for C20- and C21-prenylations of the indole ring of paspalanes and acts together with the cytochrome P450 monooxygenase ltmJ to yield lolitremanes by multiple oxidations and ring closures. The stereoisomer pairs of lolitriol and lolitrem N or lolitrem B and lolitrem F may be attributed to variations in the way in which ring closure can occur under the action of ltmJ. While the major product of this pathway is lolitrem B, the prenyl transferases and cytochrome P450 monooxygenases identified in this pathway have a remarkable versatility in their regio- and stereo-specificities to generate a diverse range of metabolites that are products of a metabolic grid rather than a linear pathway. This is FAD-dependent monooxygenase ltmM (ltmM) from Epichloe festucae var. lolii (Neotyphodium lolii).